The sequence spans 62 residues: UPF0434 protein RL4569 (62 aa).

This sequence belongs to the UPF0434 family.

The sequence is that of UPF0434 protein RL4569 from Rhizobium johnstonii (strain DSM 114642 / LMG 32736 / 3841) (Rhizobium leguminosarum bv. viciae).